Consider the following 493-residue polypeptide: Glutamate--tRNA ligase (493 aa).

The 'HIGH' region signature appears at 10-20; that stretch reads PSPTGTPHVGL. Residues 254–258 carry the 'KMSKS' region motif; that stretch reads KLSKR. Residue Lys-257 coordinates ATP.

The protein belongs to the class-I aminoacyl-tRNA synthetase family. Glutamate--tRNA ligase type 1 subfamily. In terms of assembly, monomer.

It localises to the cytoplasm. The enzyme catalyses tRNA(Glu) + L-glutamate + ATP = L-glutamyl-tRNA(Glu) + AMP + diphosphate. Its function is as follows. Catalyzes the attachment of glutamate to tRNA(Glu) in a two-step reaction: glutamate is first activated by ATP to form Glu-AMP and then transferred to the acceptor end of tRNA(Glu). The chain is Glutamate--tRNA ligase from Corynebacterium glutamicum (strain ATCC 13032 / DSM 20300 / JCM 1318 / BCRC 11384 / CCUG 27702 / LMG 3730 / NBRC 12168 / NCIMB 10025 / NRRL B-2784 / 534).